The following is an 897-amino-acid chain: Staphylococcal nuclease domain-containing protein 1 (897 aa).

4 TNase-like domains span residues 18-167 (QLQR…LWSE), 194-329 (KPVN…IWKD), 342-499 (RQFV…LHSK), and 528-663 (GRSE…LWAN). The Tudor domain maps to 732-790 (APRRGEFCIAKFADGEWYRARVEKVESPAKVHVFYIDYGNREVLSSTRLAALPPAFSTR).

Its subcellular location is the cytoplasm. The sequence is that of Staphylococcal nuclease domain-containing protein 1 (snd1) from Danio rerio (Zebrafish).